The primary structure comprises 585 residues: MAEAGTGFLEQLKSCIVWSWTYLWTVWFFIVLFLVYILRVPLKINDNLSTVSMFLNTLTPKFYVALTGTSSLISGLILIFEWWYFRKYGTSFIEQVSVSHLRPLLGGVDNNSSNNSNSSNGDSDSNRQSVSECKVWRNPLNLFRGAEYNRYTWVTGREPLTYYDMNLSAQDHQTFFTCDSDHLRPADAIMQKAWRERNPQARISAAHEALEINEIRSRVEVPLIASSTIWEIKLLPKCATAYILLAEEEATTIAEAEKLFKQALKAGDGCYRRSQQLQHHGSQYEAQHRRDTNVLVYIKRRLAMCARRLGRTREAVKMMRDLMKEFPLLSMFNIHENLLEALLELQAYADVQAVLAKYDDISLPKSATICYTAALLKARAVSDKFSPEAASRRGLSTAEMNAVEAIHRAVEFNPHVPKYLLEMKSLILPPEHILKRGDSEAIAYAFFHLAHWKRVEGALNLLHCTWEGTFRMIPYPLEKGHLFYPYPICTETADRELLPSFHEVSVYPKKELPFFILFTAGLCSFTAMLALLTHQFPELMGVFAKAMIDIFCSAEFRDWNCKSIFMRVEDELEIPPAPQSQHFQN.

A helical membrane pass occupies residues 15–35 (CIVWSWTYLWTVWFFIVLFLV). An N-linked (GlcNAc...) asparagine glycan is attached at Asn47. The helical transmembrane segment at 62–82 (FYVALTGTSSLISGLILIFEW) threads the bilayer. Phosphoserine is present on Ser386. The chain crosses the membrane as a helical span at residues 512-532 (LPFFILFTAGLCSFTAMLALL).

It belongs to the ST7 family.

The protein resides in the membrane. The chain is Suppressor of tumorigenicity 7 protein (ST7) from Equus caballus (Horse).